The following is a 163-amino-acid chain: Epithelial membrane protein 3 (163 aa).

A helical membrane pass occupies residues 4–24 (LLLVVSALHILILVLLFVATL). N-linked (GlcNAc...) asparagine glycosylation is found at asparagine 46 and asparagine 56. 3 helical membrane-spanning segments follow: residues 66–86 (VQAL…LFMI), 100–120 (TGLC…IYAI), and 139–159 (FALA…YIHL).

Belongs to the PMP-22/EMP/MP20 family.

It localises to the membrane. Functionally, probably involved in cell proliferation and cell-cell interactions. In Rattus norvegicus (Rat), this protein is Epithelial membrane protein 3 (Emp3).